A 64-amino-acid chain; its full sequence is Potassium channel toxin alpha-KTx J123 (64 aa).

An N-terminal signal peptide occupies residues 1 to 21; sequence MNKVYLVAVLVLFLALTINES. Cystine bridges form between Cys30–Cys52, Cys37–Cys60, and Cys41–Cys62.

The protein belongs to the short scorpion toxin superfamily. Potassium channel inhibitor family. Alpha-KTx 11 subfamily. As to expression, expressed by the venom gland.

The protein localises to the secreted. Functionally, this recombinant toxin inhibits mammalian voltage-gated potassium channels Kv1.3/KCNA3 (IC(50)=0.79 nM) and Kv1.2/KCNA2 (IC(50)=26.4 nM). The polypeptide is Potassium channel toxin alpha-KTx J123 (Olivierus martensii (Manchurian scorpion)).